Consider the following 366-residue polypeptide: Alanine racemase (366 aa).

The active-site Proton acceptor; specific for D-alanine is the Lys33. At Lys33 the chain carries N6-(pyridoxal phosphate)lysine. Substrate is bound at residue Arg129. Tyr253 acts as the Proton acceptor; specific for L-alanine in catalysis. Met301 is a substrate binding site.

Belongs to the alanine racemase family. Pyridoxal 5'-phosphate is required as a cofactor.

It carries out the reaction L-alanine = D-alanine. It participates in amino-acid biosynthesis; D-alanine biosynthesis; D-alanine from L-alanine: step 1/1. Functionally, catalyzes the interconversion of L-alanine and D-alanine. May also act on other amino acids. The polypeptide is Alanine racemase (alr) (Xanthomonas oryzae pv. oryzae (strain KACC10331 / KXO85)).